We begin with the raw amino-acid sequence, 126 residues long: Fluoride-specific ion channel FluC (126 aa).

Helical transmembrane passes span 6–26 (FVAV…FSVL), 36–56 (YGTL…VGFF), 69–89 (LAIT…SEVV), and 99–119 (WAAM…ALGL). Na(+) is bound by residues Gly76 and Thr79.

It belongs to the fluoride channel Fluc/FEX (TC 1.A.43) family.

It localises to the cell inner membrane. The catalysed reaction is fluoride(in) = fluoride(out). Its activity is regulated as follows. Na(+) is not transported, but it plays an essential structural role and its presence is essential for fluoride channel function. Fluoride-specific ion channel. Important for reducing fluoride concentration in the cell, thus reducing its toxicity. This is Fluoride-specific ion channel FluC from Cupriavidus taiwanensis (strain DSM 17343 / BCRC 17206 / CCUG 44338 / CIP 107171 / LMG 19424 / R1) (Ralstonia taiwanensis (strain LMG 19424)).